A 446-amino-acid polypeptide reads, in one-letter code: N-succinylarginine dihydrolase (446 aa).

Substrate contacts are provided by residues 19-28, Asn110, and 137-138; these read AGLSFGNVAS and HR. The active site involves Glu174. Position 213 (Arg213) interacts with substrate. His249 is an active-site residue. Asp251 and Asn364 together coordinate substrate. Cys370 acts as the Nucleophile in catalysis.

It belongs to the succinylarginine dihydrolase family. Homodimer.

The enzyme catalyses N(2)-succinyl-L-arginine + 2 H2O + 2 H(+) = N(2)-succinyl-L-ornithine + 2 NH4(+) + CO2. It functions in the pathway amino-acid degradation; L-arginine degradation via AST pathway; L-glutamate and succinate from L-arginine: step 2/5. Its function is as follows. Catalyzes the hydrolysis of N(2)-succinylarginine into N(2)-succinylornithine, ammonia and CO(2). The chain is N-succinylarginine dihydrolase from Burkholderia thailandensis (strain ATCC 700388 / DSM 13276 / CCUG 48851 / CIP 106301 / E264).